Consider the following 81-residue polypeptide: Putative defensin-like protein 265 (81 aa).

Residues 1–26 form the signal peptide; sequence MEKTVSRKVVVLAILLSLSCLCIAKA. 3 cysteine pairs are disulfide-bonded: Cys-48-Cys-66, Cys-54-Cys-71, and Cys-58-Cys-73.

It belongs to the DEFL family.

It localises to the secreted. This is Putative defensin-like protein 265 from Arabidopsis thaliana (Mouse-ear cress).